A 244-amino-acid polypeptide reads, in one-letter code: Phosphonates import ATP-binding protein PhnC 2 (244 aa).

The 239-residue stretch at isoleucine 6–glutamine 244 folds into the ABC transporter domain. An ATP-binding site is contributed by glycine 41 to serine 48.

It belongs to the ABC transporter superfamily. Phosphonates importer (TC 3.A.1.9.1) family. As to quaternary structure, the complex is composed of two ATP-binding proteins (PhnC), two transmembrane proteins (PhnE) and a solute-binding protein (PhnD).

It is found in the cell inner membrane. The enzyme catalyses phosphonate(out) + ATP + H2O = phosphonate(in) + ADP + phosphate + H(+). Part of the ABC transporter complex PhnCDE involved in phosphonates import. Responsible for energy coupling to the transport system. In Nostoc sp. (strain PCC 7120 / SAG 25.82 / UTEX 2576), this protein is Phosphonates import ATP-binding protein PhnC 2.